The primary structure comprises 221 residues: Interleukin-12 subunit alpha (221 aa).

The first 25 residues, 1 to 25, serve as a signal peptide directing secretion; it reads MCPLRSLLLISTLVLLHHLPHLSLG. 3 disulfides stabilise this stretch: Cys-39-Cys-112, Cys-66-Cys-198, and Cys-87-Cys-125. A glycan (N-linked (GlcNAc...) asparagine) is linked at Asn-95.

This sequence belongs to the IL-6 superfamily. Heterodimer with IL12B; disulfide-linked. This heterodimer is known as interleukin IL-12. Heterodimer with EBI3/IL27B; not disulfide-linked. This heterodimer is known as interleukin IL-35. Interacts with NBR1; this interaction promotes IL-12 secretion.

The protein resides in the secreted. Heterodimerizes with IL12B to form the IL-12 cytokine or with EBI3/IL27B to form the IL-35 cytokine. IL-12 is primarily produced by professional antigen-presenting cells (APCs) such as B-cells and dendritic cells (DCs) as well as macrophages and granulocytes and regulates T-cell and natural killer-cell responses, induces the production of interferon-gamma (IFN-gamma), favors the differentiation of T-helper 1 (Th1) cells and is an important link between innate resistance and adaptive immunity. Mechanistically, exerts its biological effects through a receptor composed of IL12R1 and IL12R2 subunits. Binding to the receptor results in the rapid tyrosine phosphorylation of a number of cellular substrates including the JAK family kinases TYK2 and JAK2. In turn, recruited STAT4 gets phosphorylated and translocates to the nucleus where it regulates cytokine/growth factor responsive genes. As part of IL-35, plays essential roles in maintaining the immune homeostasis of the liver microenvironment and also functions as an immune-suppressive cytokine. Mediates biological events through unconventional receptors composed of IL12RB2 and gp130/IL6ST heterodimers or homodimers. Signaling requires the transcription factors STAT1 and STAT4, which form a unique heterodimer that binds to distinct DNA sites. This chain is Interleukin-12 subunit alpha (IL12A), found in Bubalus carabanensis (Swamp type water buffalo).